Reading from the N-terminus, the 196-residue chain is Probable phosphoheptose isomerase (196 aa).

The region spanning 43-196 is the SIS domain; sequence IVNVFNSGGK…MICSVIDSYY (154 aa). Residue 58-60 participates in substrate binding; that stretch reads NGG. Zn(2+) is bound by residues His-67 and Glu-71. Residues Glu-71, 100 to 101, 126 to 128, Ser-131, and Gln-178 contribute to the substrate site; these read ND and STS. 2 residues coordinate Zn(2+): Gln-178 and His-186.

Belongs to the SIS family. GmhA subfamily. Requires Zn(2+) as cofactor.

The protein localises to the cytoplasm. It catalyses the reaction 2 D-sedoheptulose 7-phosphate = D-glycero-alpha-D-manno-heptose 7-phosphate + D-glycero-beta-D-manno-heptose 7-phosphate. The protein operates within carbohydrate biosynthesis; D-glycero-D-manno-heptose 7-phosphate biosynthesis; D-glycero-alpha-D-manno-heptose 7-phosphate and D-glycero-beta-D-manno-heptose 7-phosphate from sedoheptulose 7-phosphate: step 1/1. Catalyzes the isomerization of sedoheptulose 7-phosphate in D-glycero-D-manno-heptose 7-phosphate. This chain is Probable phosphoheptose isomerase, found in Thermoplasma volcanium (strain ATCC 51530 / DSM 4299 / JCM 9571 / NBRC 15438 / GSS1).